Consider the following 946-residue polypeptide: Glucoamylase 1 (946 aa).

Positions 1–20 (MKLLSKVFVTALGLTSIVNA) are cleaved as a signal peptide. N-linked (GlcNAc...) asparagine glycans are attached at residues Asn-51, Asn-68, Asn-97, Asn-187, Asn-244, Asn-373, Asn-393, Asn-406, and Asn-437. Residues Asp-462 and Glu-465 contribute to the active site. Asn-505 carries N-linked (GlcNAc...) asparagine glycosylation. The segment covering 517–532 (AATKTTTTTSSSTSTS) has biased composition (low complexity). Residues 517 to 541 (AATKTTTTTSSSTSTSIDGKNTLAP) are disordered. N-linked (GlcNAc...) asparagine glycosylation is present at Asn-570. The active-site Proton donor is the Asp-628. N-linked (GlcNAc...) asparagine glycosylation is found at Asn-704, Asn-772, Asn-801, Asn-895, and Asn-912.

The protein belongs to the glycosyl hydrolase 31 family. The N-terminus is blocked.

It localises to the secreted. Its subcellular location is the cell wall. The protein resides in the membrane. The enzyme catalyses Hydrolysis of terminal (1-&gt;4)-linked alpha-D-glucose residues successively from non-reducing ends of the chains with release of beta-D-glucose.. In Candida albicans (strain SC5314 / ATCC MYA-2876) (Yeast), this protein is Glucoamylase 1 (GAM1).